The following is a 151-amino-acid chain: Protein NrdI (151 aa).

It belongs to the NrdI family.

Functionally, probably involved in ribonucleotide reductase function. The sequence is that of Protein NrdI from Mesoplasma florum (strain ATCC 33453 / NBRC 100688 / NCTC 11704 / L1) (Acholeplasma florum).